Reading from the N-terminus, the 432-residue chain is Adenylosuccinate synthetase (432 aa).

GTP is bound by residues 13 to 19 (GDEGKGK) and 41 to 43 (GHT). Catalysis depends on Asp14, which acts as the Proton acceptor. The Mg(2+) site is built by Asp14 and Gly41. Residues 14 to 17 (DEGK), 39 to 42 (NAGH), Thr130, Arg144, Gln225, Thr240, and Arg304 contribute to the IMP site. The active-site Proton donor is the His42. A substrate-binding site is contributed by 300 to 306 (ATTGRKR). GTP-binding positions include Arg306, 332-334 (KLD), and 415-417 (STG).

Belongs to the adenylosuccinate synthetase family. In terms of assembly, homodimer. Requires Mg(2+) as cofactor.

Its subcellular location is the cytoplasm. It carries out the reaction IMP + L-aspartate + GTP = N(6)-(1,2-dicarboxyethyl)-AMP + GDP + phosphate + 2 H(+). Its pathway is purine metabolism; AMP biosynthesis via de novo pathway; AMP from IMP: step 1/2. Functionally, plays an important role in the de novo pathway of purine nucleotide biosynthesis. Catalyzes the first committed step in the biosynthesis of AMP from IMP. The chain is Adenylosuccinate synthetase from Tolumonas auensis (strain DSM 9187 / NBRC 110442 / TA 4).